The sequence spans 182 residues: Interferon gamma 1 (182 aa).

An N-terminal signal peptide occupies residues 1 to 21; it reads MIAQNMTIFFWGVCLLTSGWA. N-linked (GlcNAc...) asparagine glycosylation is present at N93.

The protein belongs to the type II (or gamma) interferon family. In terms of assembly, homodimer. Highly expressed in spleen. Also detected at lower levels in brain, gill, kidney, heart, intestine and muscle. In immune cell populations, has highest expression in peripheral blood leukocytes and splenocytes. Detected in kidney-derived monocytes, neutrophils, macrophages and leukocytes.

The protein localises to the secreted. In terms of biological role, cytokine which binds to interferon gamma receptor 1-like (ifngr1l). Has activating effects on primary macrophages and neutrophils. Induces nitric oxide production and phagocytic responses in macrophages. Primes macrophages and neutrophils for production of reactive oxygen intermediates (ROI). Stimulates phosphorylation and nuclear localization of the JAK/STAT signal transducer stat1. Promotes increased expression of a number of genes important for macrophage activity, including the interferon regulatory factors irf1, irf2, irf8 and irf9. The polypeptide is Interferon gamma 1 (Carassius auratus (Goldfish)).